We begin with the raw amino-acid sequence, 411 residues long: MMP alpha-(1-&gt;4)-mannosyltransferase (411 aa).

Belongs to the glycosyltransferase group 1 family. Glycosyltransferase 4 subfamily.

It carries out the reaction [3-O-methyl-alpha-D-mannosyl-(1-&gt;4)](n)-3-O-methyl-D-mannose + GDP-alpha-D-mannose = alpha-D-mannosyl-(1-&gt;4)-[3-O-methyl-alpha-D-mannosyl-(1-&gt;4)](n)-3-O-methyl-D-mannose + GDP + H(+). It catalyses the reaction [3-O-methyl-alpha-D-mannosyl-(1-&gt;4)](n)-1-O,3-O-dimethyl-alpha-D-mannose + GDP-alpha-D-mannose = alpha-D-mannosyl-(1-&gt;4)-[3-O-methyl-alpha-D-mannosyl-(1-&gt;4)](n)-1-O,3-O-dimethyl-alpha-D-mannose + GDP + H(+). With respect to regulation, activity is significantly enhanced in the presence of Mg(2+). Functionally, glycosyltransferase involved in the biosynthesis of 3-O-methylmannose polysaccharides (MMP), which are intracellular polymethylated polysaccharides implicated in the modulation of fatty acid metabolism in non-tuberculous mycobacteria. Highly specific alpha-(1-&gt;4)-mannosyltransferase that can transfer mannose units from GDP-mannose to a wide range of alpha-(1-&gt;4) oligomannosides longer than three mannoses, including all hydrolytic products of MmpH. Can use synthetic trimannosides and tetramannosides as substrates, but not mono- and disaccharides, and is significantly more active with the methylated substrates, preferring the tetramannosides over the trimannosides. The polypeptide is MMP alpha-(1-&gt;4)-mannosyltransferase (Mycolicibacterium hassiacum (strain DSM 44199 / CIP 105218 / JCM 12690 / 3849) (Mycobacterium hassiacum)).